A 97-amino-acid polypeptide reads, in one-letter code: Large ribosomal subunit protein bL28 (97 aa).

Belongs to the bacterial ribosomal protein bL28 family.

The polypeptide is Large ribosomal subunit protein bL28 (Rickettsia akari (strain Hartford)).